The chain runs to 213 residues: Ribosomal RNA small subunit methyltransferase G (213 aa).

S-adenosyl-L-methionine-binding positions include G55, 105 to 106 (AE), and R124.

This sequence belongs to the methyltransferase superfamily. RNA methyltransferase RsmG family.

It is found in the cytoplasm. Specifically methylates the N7 position of a guanine in 16S rRNA. This chain is Ribosomal RNA small subunit methyltransferase G, found in Fervidobacterium nodosum (strain ATCC 35602 / DSM 5306 / Rt17-B1).